Here is a 303-residue protein sequence, read N- to C-terminus: Flavin-dependent thymidylate synthase (303 aa).

In terms of domain architecture, ThyX spans 41–258; it reads GKVALVDTMP…PVACEAFIDY (218 aa). FAD is bound by residues serine 95, 118-120, and glutamate 126; that span reads RHR. DUMP-binding positions include 115-118, 126-130, and arginine 197; these read QWIR and EYSAR. Positions 118–128 match the ThyX motif motif; it reads RHRTANVNEYS. Residues 213 to 215 and histidine 219 contribute to the FAD site; that span reads DLH. Arginine 224 provides a ligand contact to dUMP. Arginine 224 functions as the Involved in ionization of N3 of dUMP, leading to its activation in the catalytic mechanism.

The protein belongs to the thymidylate synthase ThyX family. Homotetramer. It depends on FAD as a cofactor.

The enzyme catalyses dUMP + (6R)-5,10-methylene-5,6,7,8-tetrahydrofolate + NADPH + H(+) = dTMP + (6S)-5,6,7,8-tetrahydrofolate + NADP(+). The protein operates within pyrimidine metabolism; dTTP biosynthesis. Its function is as follows. Catalyzes the reductive methylation of 2'-deoxyuridine-5'-monophosphate (dUMP) to 2'-deoxythymidine-5'-monophosphate (dTMP) while utilizing 5,10-methylenetetrahydrofolate (mTHF) as the methyl donor, and NADPH and FADH(2) as the reductant. In Dictyostelium discoideum (Social amoeba), this protein is Flavin-dependent thymidylate synthase (thyA).